A 290-amino-acid chain; its full sequence is Fructose-1,6-bisphosphatase class 1 (290 aa).

4 residues coordinate Mg(2+): glutamate 78, aspartate 96, leucine 98, and aspartate 99. Substrate contacts are provided by residues 99–102 (DGSS), tyrosine 201, and lysine 226. Glutamate 232 contacts Mg(2+).

Belongs to the FBPase class 1 family. In terms of assembly, homotetramer. Requires Mg(2+) as cofactor.

It localises to the cytoplasm. The catalysed reaction is beta-D-fructose 1,6-bisphosphate + H2O = beta-D-fructose 6-phosphate + phosphate. The protein operates within carbohydrate biosynthesis; gluconeogenesis. The sequence is that of Fructose-1,6-bisphosphatase class 1 from Helicobacter pylori (strain ATCC 700392 / 26695) (Campylobacter pylori).